Consider the following 287-residue polypeptide: Large ribosomal subunit protein uL2 (287 aa).

The segment at 221–287 is disordered; it reads RGSVMNPCDH…SKRSRGGRDS (67 aa). Basic residues predominate over residues 271–287; that stretch reads LRKRRKTSKRSRGGRDS.

Belongs to the universal ribosomal protein uL2 family. Part of the 50S ribosomal subunit. Forms a bridge to the 30S subunit in the 70S ribosome.

One of the primary rRNA binding proteins. Required for association of the 30S and 50S subunits to form the 70S ribosome, for tRNA binding and peptide bond formation. It has been suggested to have peptidyltransferase activity; this is somewhat controversial. Makes several contacts with the 16S rRNA in the 70S ribosome. This is Large ribosomal subunit protein uL2 from Synechococcus sp. (strain CC9605).